The following is a 369-amino-acid chain: Methylthioribose-1-phosphate isomerase (369 aa).

Methionine 1 is modified (N-acetylmethionine). Arginine 158 bears the Omega-N-methylarginine mark. Aspartate 248 acts as the Proton donor in catalysis. The residue at position 366 (serine 366) is a Phosphoserine.

This sequence belongs to the eIF-2B alpha/beta/delta subunits family. MtnA subfamily.

It localises to the cytoplasm. The protein resides in the nucleus. The catalysed reaction is 5-(methylsulfanyl)-alpha-D-ribose 1-phosphate = 5-(methylsulfanyl)-D-ribulose 1-phosphate. It participates in amino-acid biosynthesis; L-methionine biosynthesis via salvage pathway; L-methionine from S-methyl-5-thio-alpha-D-ribose 1-phosphate: step 1/6. Functionally, catalyzes the interconversion of methylthioribose-1-phosphate (MTR-1-P) into methylthioribulose-1-phosphate (MTRu-1-P). In Mus musculus (Mouse), this protein is Methylthioribose-1-phosphate isomerase (Mri1).